The following is a 135-amino-acid chain: MEGIIICIKLGVVFLGTLFTWIFGAWDMPIVTLLVFIFLDYLTGVIKGCKSKELCSNIGLRGITKKGLILVVLLVAVMLDRLLDNGAWMFRTLIAYFYIMNEGISILENCAALGVPIPEFLRQALKQLNNKNNIK.

4 consecutive transmembrane segments (helical) span residues 4-24 (IIIC…WIFG), 26-46 (WDMP…TGVI), 68-88 (LILV…NGAW), and 93-113 (LIAY…CAAL).

Belongs to the bacteriophage holin family. Cp-1 holin subfamily.

The protein resides in the cell membrane. This is an uncharacterized protein from Clostridium perfringens (strain 13 / Type A).